Reading from the N-terminus, the 270-residue chain is Catechol 1,2-dioxygenase (270 aa).

4 residues coordinate Fe cation: Tyr-152, Tyr-186, His-210, and His-212.

The protein belongs to the intradiol ring-cleavage dioxygenase family. Requires Fe(3+) as cofactor.

It carries out the reaction catechol + O2 = cis,cis-muconate + 2 H(+). This Rhodococcus opacus (Nocardia opaca) protein is Catechol 1,2-dioxygenase (catA).